The sequence spans 248 residues: Uridylate kinase (248 aa).

15–18 contributes to the ATP binding site; that stretch reads KLSG. Positions 23–28 are involved in allosteric activation by GTP; it reads GAEGFG. Gly-57 contributes to the UMP binding site. ATP is bound by residues Gly-58 and Arg-62. UMP contacts are provided by residues Asp-77 and 138-145; that span reads TGNPFFTT. ATP is bound by residues Thr-165, Tyr-171, and Asp-174.

It belongs to the UMP kinase family. In terms of assembly, homohexamer.

The protein localises to the cytoplasm. The enzyme catalyses UMP + ATP = UDP + ADP. It participates in pyrimidine metabolism; CTP biosynthesis via de novo pathway; UDP from UMP (UMPK route): step 1/1. Allosterically activated by GTP. Inhibited by UTP. In terms of biological role, catalyzes the reversible phosphorylation of UMP to UDP. In Yersinia enterocolitica serotype O:8 / biotype 1B (strain NCTC 13174 / 8081), this protein is Uridylate kinase.